The primary structure comprises 461 residues: Argininosuccinate lyase (461 aa).

It belongs to the lyase 1 family. Argininosuccinate lyase subfamily.

It is found in the cytoplasm. It catalyses the reaction 2-(N(omega)-L-arginino)succinate = fumarate + L-arginine. It functions in the pathway amino-acid biosynthesis; L-arginine biosynthesis; L-arginine from L-ornithine and carbamoyl phosphate: step 3/3. The polypeptide is Argininosuccinate lyase (Laribacter hongkongensis (strain HLHK9)).